The following is a 184-amino-acid chain: MMSFLLGAILTLLWAPTAQAEVLLQPDFNAEKFSGLWYVVSMASDCRVFLGKKDHLSMSTRAIRPTEEGGLHVHMEFPGADGCNQVDAEYLKVGSEGHFRVPALGYLDVRIVDTDYSSFAVLYIYKELEGALSTMVQLYSRTQDVSPQALKSFQDFYPTLGLPKDMMVMLPQSDACNPESKEAP.

The first 20 residues, 1 to 20 (MMSFLLGAILTLLWAPTAQA), serve as a signal peptide directing secretion. Cys83 and Cys176 form a disulfide bridge.

This sequence belongs to the calycin superfamily. Lipocalin family.

It localises to the secreted. This chain is Lipocalin-15 (LCN15), found in Homo sapiens (Human).